We begin with the raw amino-acid sequence, 827 residues long: Lon protease (827 aa).

Positions 1 to 27 (MNDETLREQTTAESEETSPTTPSPEPE) are disordered. One can recognise a Lon N-terminal domain in the interval 32 to 225 (LPLIPLEGAV…KVLMFYRKQF (194 aa)). 385-392 (GPPGVGKT) contributes to the ATP binding site. The Lon proteolytic domain occupies 625 to 806 (IDQPGVAIGL…DEVLSIALLP (182 aa)). Active-site residues include Ser-712 and Lys-755.

It belongs to the peptidase S16 family. Homohexamer. Organized in a ring with a central cavity.

It localises to the cytoplasm. It carries out the reaction Hydrolysis of proteins in presence of ATP.. In terms of biological role, ATP-dependent serine protease that mediates the selective degradation of mutant and abnormal proteins as well as certain short-lived regulatory proteins. Required for cellular homeostasis and for survival from DNA damage and developmental changes induced by stress. Degrades polypeptides processively to yield small peptide fragments that are 5 to 10 amino acids long. Binds to DNA in a double-stranded, site-specific manner. The protein is Lon protease of Chloroflexus aurantiacus (strain ATCC 29366 / DSM 635 / J-10-fl).